A 321-amino-acid chain; its full sequence is Viral T-cell receptor beta chain-like T17T-22 (321 aa).

The N-terminal stretch at 1-28 (MISWLPSVAMGSRLLCCVALCLLGAGPA) is a signal peptide. Positions 29–122 (DSGLTQTPRH…DSALYLCASS (94 aa)) are v segment. Asparagine 105 is a glycosylation site (N-linked (GlcNAc...) asparagine; by host). Residues 123–128 (PNEDSE) form a d segment region. Positions 129–144 (YGETLYFGEGSRLTVV) are j segment. The interval 145–321 (EDLKKVSPPK…LMAKVKRKDS (177 aa)) is c region. N-linked (GlcNAc...) asparagine; by host glycosylation is found at asparagine 214 and asparagine 264.

The sequence is that of Viral T-cell receptor beta chain-like T17T-22 (V-TCR) from Feline leukemia virus.